We begin with the raw amino-acid sequence, 320 residues long: MELMARFLERYLHFAPTNTEPPGTLIWFLGHSYKIEDSQWPEKFLYDSFSLITITYRSGIEGLENMTSDTGWGCMIRSTQTLLANCLRICYPEKQLKEILALFADEPSAPFSIHQFVTMGKTLCDINPGQWFGPTTSCSCVARLSDQNPDVPLHVYVARNGNAIYRDQLSKVSFPVLLLIPTRLGIDSINESYYDQLLQVFEIRSFVGITGGRPRSAHYFYARQNQYFFYLDPHCTHFAHTTTQPASEETFHSATLRRVAIQDLDPCMIFGFLIRDEEEWHSFEANQKYFADIVQIFDSEPQPVETHDDFVLDENVEDHL.

The active-site Nucleophile is cysteine 74. Residues aspartate 232 and histidine 234 contribute to the active site.

It belongs to the peptidase C54 family.

It is found in the cytoplasm. It localises to the nucleus. The protein localises to the preautophagosomal structure. It carries out the reaction [protein]-C-terminal L-amino acid-glycyl-phosphatidylethanolamide + H2O = [protein]-C-terminal L-amino acid-glycine + a 1,2-diacyl-sn-glycero-3-phosphoethanolamine. Functionally, cysteine protease that plays a key role in cytoplasm to vacuole transport (Cvt) and autophagy by mediating both proteolytic activation and delipidation of atg8. Required for selective autophagic degradation of the nucleus (nucleophagy) as well as for mitophagy which contributes to regulate mitochondrial quantity and quality by eliminating the mitochondria to a basal level to fulfill cellular energy requirements and preventing excess ROS production. The protease activity is required for proteolytic activation of atg8: cleaves the C-terminal amino acid of atg8 to reveal a C-terminal glycine. Atg8 ubiquitin-like activity requires the exposure of the glycine at the C-terminus for its conjugation to phosphatidylethanolamine (PE) and its insertion to membranes, which is necessary for autophagy. The atg8-PE conjugate mediates tethering between adjacent membranes and stimulates membrane hemifusion, leading to expansion of the autophagosomal membrane during autophagy. In addition to the protease activity, also catalyzes deconjugation of PE-conjugated forms of atg8 during macroautophagy: atg8 delipidation is required to release the protein from membranes, which facilitates multiple events during macroautophagy, and especially for efficient autophagosome biogenesis, the assembly of atg9-containing tubulovesicular clusters into phagophores/autophagosomes, and for the disassembly of PAS-associated ATG components. Atg8 delipidation by atg4 also recycles atg8-PE generated on inappropriate membranes to maintain a reservoir of unlipidated atg8 that is required for autophagosome formation at the PAS. Plays a role in meiosis and sporulation. This chain is Probable cysteine protease atg4 (atg4), found in Schizosaccharomyces pombe (strain 972 / ATCC 24843) (Fission yeast).